The sequence spans 510 residues: Ribonuclease Y (510 aa).

Residues 2–22 (IYIIFSSIFAGFILGFLVRVF) traverse the membrane as a helical segment. In terms of domain architecture, KH spans 198 to 258 (TVASVELPND…IRKELAKRTL (61 aa)). The HD domain maps to 324 to 419 (VLSHSKETAI…VQIADAISAS (96 aa)).

Belongs to the RNase Y family.

The protein localises to the cell membrane. In terms of biological role, endoribonuclease that initiates mRNA decay. The polypeptide is Ribonuclease Y (Borreliella burgdorferi (strain ATCC 35210 / DSM 4680 / CIP 102532 / B31) (Borrelia burgdorferi)).